A 678-amino-acid chain; its full sequence is Glycine--tRNA ligase beta subunit (678 aa).

This sequence belongs to the class-II aminoacyl-tRNA synthetase family. Tetramer of two alpha and two beta subunits.

The protein resides in the cytoplasm. The enzyme catalyses tRNA(Gly) + glycine + ATP = glycyl-tRNA(Gly) + AMP + diphosphate. The polypeptide is Glycine--tRNA ligase beta subunit (Streptococcus pneumoniae (strain 70585)).